The primary structure comprises 309 residues: Homoserine O-succinyltransferase (309 aa).

The active-site Acyl-thioester intermediate is Cys-142. Positions 163 and 192 each coordinate substrate. The active-site Proton acceptor is His-235. Glu-237 is a catalytic residue. Arg-249 serves as a coordination point for substrate.

It belongs to the MetA family.

The protein resides in the cytoplasm. The enzyme catalyses L-homoserine + succinyl-CoA = O-succinyl-L-homoserine + CoA. Its pathway is amino-acid biosynthesis; L-methionine biosynthesis via de novo pathway; O-succinyl-L-homoserine from L-homoserine: step 1/1. Its function is as follows. Transfers a succinyl group from succinyl-CoA to L-homoserine, forming succinyl-L-homoserine. The chain is Homoserine O-succinyltransferase from Enterobacter sp. (strain 638).